A 171-amino-acid chain; its full sequence is O-acetyl-ADP-ribose deacetylase 2 (171 aa).

A Macro domain is found at 1-171 (MNKITVIQGD…NYDLYLKLLN (171 aa)). Substrate-binding positions include 10-11 (DI), N24, 32-34 (GVD), and 121-125 (STGIY). The Proton acceptor role is filled by D34.

The protein belongs to the MacroD-type family. YmdB subfamily. Homodimer. Interacts with RNase III.

It catalyses the reaction 3''-O-acetyl-ADP-D-ribose + H2O = ADP-D-ribose + acetate + H(+). The catalysed reaction is 2''-O-acetyl-ADP-D-ribose + H2O = ADP-D-ribose + acetate + H(+). Functionally, deacetylates O-acetyl-ADP ribose to yield ADP-ribose and free acetate. Down-regulates ribonuclease 3 (RNase III) activity. Acts by interacting directly with the region of the ribonuclease that is required for dimerization/activation. This is O-acetyl-ADP-ribose deacetylase 2 from Pantoea vagans (strain C9-1) (Pantoea agglomerans (strain C9-1)).